Here is a 248-residue protein sequence, read N- to C-terminus: Trihelix transcription factor ENAP2 (248 aa).

The segment covering 1–13 (METTTPQSKSSVS) has biased composition (polar residues). The interval 1 to 20 (METTTPQSKSSVSHRPPLGR) is disordered. Residues 24 to 113 (WSEEATATLV…RLDVLIGPVV (90 aa)) constitute a DNA-binding region (MADF). Positions 69–76 (RKKTDLQC) match the Nuclear localization signal motif. The disordered stretch occupies residues 123-150 (SAPFKNHLNPTGSNSTGSSLEDDDEDDD). Positions 130–141 (LNPTGSNSTGSS) are enriched in polar residues. Residues 190–210 (YERIEGKKQQMMIELEKQRME) are a coiled coil.

As to quaternary structure, interacts with the Agrobacterium tumefaciens virulence protein F (VirF) in the nucleus. Binds to EIN2 C-terminal region in the presence of ethylene.

It is found in the nucleus. The protein localises to the nucleoplasm. Its function is as follows. Probable transcription regulator. Promotes histone acetylation during ethylene signaling in an EIN2-dependent manner, thus regulating positively ethylene-responsive genes. The polypeptide is Trihelix transcription factor ENAP2 (Arabidopsis thaliana (Mouse-ear cress)).